The chain runs to 366 residues: Aminomethyltransferase (366 aa).

Belongs to the GcvT family. In terms of assembly, the glycine cleavage system is composed of four proteins: P, T, L and H.

It catalyses the reaction N(6)-[(R)-S(8)-aminomethyldihydrolipoyl]-L-lysyl-[protein] + (6S)-5,6,7,8-tetrahydrofolate = N(6)-[(R)-dihydrolipoyl]-L-lysyl-[protein] + (6R)-5,10-methylene-5,6,7,8-tetrahydrofolate + NH4(+). Its function is as follows. The glycine cleavage system catalyzes the degradation of glycine. This is Aminomethyltransferase from Bordetella pertussis (strain Tohama I / ATCC BAA-589 / NCTC 13251).